A 276-amino-acid polypeptide reads, in one-letter code: NADPH-dependent 7-cyano-7-deazaguanine reductase (276 aa).

Substrate is bound at residue 83 to 85; sequence IES. Residue 85–86 participates in NADPH binding; it reads SK. Residue C184 is the Thioimide intermediate of the active site. D191 acts as the Proton donor in catalysis. Position 223 to 224 (223 to 224) interacts with substrate; the sequence is HE. 252–253 serves as a coordination point for NADPH; it reads RG.

Belongs to the GTP cyclohydrolase I family. QueF type 2 subfamily. As to quaternary structure, homodimer.

It localises to the cytoplasm. The enzyme catalyses 7-aminomethyl-7-carbaguanine + 2 NADP(+) = 7-cyano-7-deazaguanine + 2 NADPH + 3 H(+). The protein operates within tRNA modification; tRNA-queuosine biosynthesis. Catalyzes the NADPH-dependent reduction of 7-cyano-7-deazaguanine (preQ0) to 7-aminomethyl-7-deazaguanine (preQ1). The chain is NADPH-dependent 7-cyano-7-deazaguanine reductase from Pseudomonas syringae pv. tomato (strain ATCC BAA-871 / DC3000).